The chain runs to 270 residues: tRNA pseudouridine synthase A (270 aa).

Asp52 acts as the Nucleophile in catalysis. Substrate is bound at residue Tyr110.

The protein belongs to the tRNA pseudouridine synthase TruA family. In terms of assembly, homodimer.

It carries out the reaction uridine(38/39/40) in tRNA = pseudouridine(38/39/40) in tRNA. Functionally, formation of pseudouridine at positions 38, 39 and 40 in the anticodon stem and loop of transfer RNAs. The polypeptide is tRNA pseudouridine synthase A (Roseiflexus castenholzii (strain DSM 13941 / HLO8)).